Here is a 259-residue protein sequence, read N- to C-terminus: Hydroxyethylthiazole kinase 1 (259 aa).

Methionine 38 is a binding site for substrate. ATP-binding residues include arginine 113 and serine 158. Glycine 185 is a substrate binding site.

It belongs to the Thz kinase family. Requires Mg(2+) as cofactor.

It catalyses the reaction 5-(2-hydroxyethyl)-4-methylthiazole + ATP = 4-methyl-5-(2-phosphooxyethyl)-thiazole + ADP + H(+). It functions in the pathway cofactor biosynthesis; thiamine diphosphate biosynthesis; 4-methyl-5-(2-phosphoethyl)-thiazole from 5-(2-hydroxyethyl)-4-methylthiazole: step 1/1. Catalyzes the phosphorylation of the hydroxyl group of 4-methyl-5-beta-hydroxyethylthiazole (THZ). This chain is Hydroxyethylthiazole kinase 1, found in Leuconostoc mesenteroides subsp. mesenteroides (strain ATCC 8293 / DSM 20343 / BCRC 11652 / CCM 1803 / JCM 6124 / NCDO 523 / NBRC 100496 / NCIMB 8023 / NCTC 12954 / NRRL B-1118 / 37Y).